We begin with the raw amino-acid sequence, 919 residues long: Exostosin-like 3 (919 aa).

Residues 1-30 (MTGYTMLRNGGAGNGGQTCMLRWSNRIRLT) lie on the Cytoplasmic side of the membrane. The interval 1–140 (MTGYTMLRNG…LKNVISQTEH (140 aa)) is required for interaction with REG3A. Residues 31–51 (WLSFTLFVILVFFPLIAHYYL) traverse the membrane as a helical; Signal-anchor for type II membrane protein segment. Topologically, residues 52–919 (TTLDEADEAG…HDKTKCFKFI (868 aa)) are lumenal. Intrachain disulfides connect Cys177-Cys182 and Cys188-Cys236. Asn290 carries N-linked (GlcNAc...) asparagine glycosylation. The residue at position 362 (Ser362) is a Phosphoserine. A disulfide bridge links Cys400 with Cys415. Asn592 is a glycosylation site (N-linked (GlcNAc...) asparagine). UDP-N-acetyl-alpha-D-glucosamine is bound by residues Leu668, Arg672, Asn697, Asn723, Arg728, Asp744, Asp745, and Asp746. Asp746 serves as a coordination point for Mn(2+). Asn790 carries an N-linked (GlcNAc...) asparagine glycan. A disulfide bridge links Cys831 with Cys879. Positions 832, 833, and 876 each coordinate UDP-N-acetyl-alpha-D-glucosamine. Asp833 is a catalytic residue.

It belongs to the glycosyltransferase 47 family. As to quaternary structure, homodimer; disulfide-linked. Interacts with REG3A. Mn(2+) serves as cofactor. In terms of tissue distribution, ubiquitous. Expressed in keratinocytes. Expressed in pancreas.

It is found in the endoplasmic reticulum membrane. The protein resides in the golgi apparatus. It localises to the cell membrane. The protein localises to the nucleus. It carries out the reaction 3-O-(beta-D-GlcA-(1-&gt;3)-beta-D-Gal-(1-&gt;3)-beta-D-Gal-(1-&gt;4)-beta-D-Xyl)-L-seryl-[protein] + UDP-N-acetyl-alpha-D-glucosamine = 3-O-(alpha-D-GlcNAc-(1-&gt;4)-beta-D-GlcA-(1-&gt;3)-beta-D-Gal-(1-&gt;3)-beta-D-Gal-(1-&gt;4)-beta-D-Xyl)-L-seryl-[protein] + UDP + H(+). It participates in glycan metabolism; heparan sulfate biosynthesis. Glycosyltransferase which regulates the biosynthesis of heparan sulfate (HS). Initiates HS synthesis by transferring the first N-acetyl-alpha-D-glucosamine (alpha-GlcNAc) residue (GlcNAcT-I activity) to the tetrasaccharide linker (GlcA-Gal-Gal-Xyl-)Ser core linker. May also transfer alpha-GlcNAc residues during HS elongation (GlcNAcT-II activity). Lacks glucuronyl transferase II (GlcAT-II) activity. Important for both skeletal development and hematopoiesis, through the formation of HS proteoglycans (HSPGs). Through the synthesis of HS, regulates postnatal pancreatic islet maturation and insulin secretion. Its function is as follows. Receptor for REG3A, REG3B and REG3G, induces the activation of downstream signaling pathways such as PI3K-AKT or RAS-RAF-MEK-ERK signaling pathway. Required for the function of REG3A in regulating keratinocyte proliferation and differentiation. Required for the inhibition of skin inflammation mediated by REG3A through the activation of PI3K-AKT-STAT3 pathway. Required for the function of REG3A and REG3G in glucose tolerance in pancreas. Expressed in microglia, is activated by nociceptor-derived REG3G in response to endotoxins, leading to the inhibition of kynurenine pathway to prevent endotoxic death. This chain is Exostosin-like 3, found in Homo sapiens (Human).